The sequence spans 154 residues: Spermatogenesis-associated protein 19, mitochondrial (154 aa).

Residues 1–24 constitute a mitochondrion transit peptide; that stretch reads MIITTWIVYILARKGAGLPFPPKV. Phosphoserine occurs at positions 26 and 116.

It localises to the mitochondrion outer membrane. It is found in the mitochondrion. Its subcellular location is the cell projection. The protein resides in the cilium. The protein localises to the flagellum. Functionally, essential for sperm motility and male fertility. Plays an important role in sperm motility by regulating the organization and function of the mitochondria and is also required for correct sperm midpiece assembly. This is Spermatogenesis-associated protein 19, mitochondrial (SPATA19) from Bos taurus (Bovine).